A 1204-amino-acid chain; its full sequence is ATP-dependent helicase/nuclease subunit A (1204 aa).

Residues 2-472 (PQFTKEQEKA…ILLSDNFRST (471 aa)) form the UvrD-like helicase ATP-binding domain. 23-30 (ASAGSGKT) contacts ATP. Positions 500-783 (GQLIFGAKYY…RLMTIHGSKG (284 aa)) constitute a UvrD-like helicase C-terminal domain.

The protein belongs to the helicase family. AddA subfamily. In terms of assembly, heterodimer of AddA and AddB/RexB. It depends on Mg(2+) as a cofactor.

The catalysed reaction is Couples ATP hydrolysis with the unwinding of duplex DNA by translocating in the 3'-5' direction.. It carries out the reaction ATP + H2O = ADP + phosphate + H(+). In terms of biological role, the heterodimer acts as both an ATP-dependent DNA helicase and an ATP-dependent, dual-direction single-stranded exonuclease. Recognizes the chi site generating a DNA molecule suitable for the initiation of homologous recombination. The AddA nuclease domain is required for chi fragment generation; this subunit has the helicase and 3' -&gt; 5' nuclease activities. The sequence is that of ATP-dependent helicase/nuclease subunit A from Lactobacillus helveticus (strain DPC 4571).